The primary structure comprises 173 residues: Sterile alpha motif domain-containing protein 5 (173 aa).

In terms of domain architecture, SAM spans 1–65; sequence MCTNIVYEWL…LEAVRRLREQ (65 aa). Positions 75–119 are disordered; it reads TLEPQPAPPGPPADAVPTGRRGEPCGGPAQGTRGDSRGHTTAPRS. Positions 79–88 are enriched in pro residues; the sequence is QPAPPGPPAD.

Interacts promiscuously (via SAM domain) with EPHA5, EPHA6, EPHA7, EPHA8, EPHB1, EPHB2, EPHB3 and EPHB4 (via SAM domain) (in vitro). As to expression, detected in biliary epithelial cells on bile ducts at the hepatic hilum (at protein level).

The protein localises to the cytoplasm. This is Sterile alpha motif domain-containing protein 5 (SAMD5) from Homo sapiens (Human).